Here is a 562-residue protein sequence, read N- to C-terminus: MPLKSFFFSAFLVLCLSKFTQGVGTTEKEESLSPLELNILQNKFASYYANDTITVKGITIGGWLVTEPYITPSLYRNATSLAKQQNSSSNISIVDEFTLCKTLGYNTSLTLLDNHFKTWITEDDFEQIKTNGFNLVRIPIGYWAWKQNTDKNLYIDNITFNDPYVSDGLQLKYLNNALEWAQKYELNVWLDLHGAPGSQNGFDNSGERILYGDLGWLRLNNTKELTLAIWRDMFQTFLNKGDKSPVVGIQIVNEPLGGKIDVSDITEMYYEAFDLLKKNQNSSDNTTFVIHDGFQGIGHWNLELNPTYQNVSHHYFNLTGANYSSQDILVDHHHYEVFTDAQLAETQFARIENIINYGDSIHKELSFHPAVVGEWSGAITDCATWLNGVGVGARYDGSYYNTTLFTTNDKPVGTCISQNSLADWTQDYRDRVRQFIEAQLATYSSKTTGWIFWNWKTEDAVEWDYLKLKEANLFPSPFDNYTYFKADGSIEEKFSSSLSAQAFPRTTSSVLSSTTTSRKSKNAAISNKLTTSQLLPIKNMSLTWKASVCALAITIAALCASL.

An N-terminal signal peptide occupies residues 1–22; that stretch reads MPLKSFFFSAFLVLCLSKFTQG. N-linked (GlcNAc...) asparagine glycosylation is found at Asn50, Asn77, Asn86, Asn90, Asn106, Asn157, and Asn220. Glu254 (proton donor) is an active-site residue. N-linked (GlcNAc...) asparagine glycosylation is found at Asn281, Asn285, Asn310, Asn317, and Asn322. Catalysis depends on His334, which acts as the Nucleophile. 3 N-linked (GlcNAc...) asparagine glycosylation sites follow: Asn401, Asn480, and Asn539.

It belongs to the glycosyl hydrolase 5 (cellulase A) family.

It is found in the cell membrane. The enzyme catalyses Successive hydrolysis of beta-D-glucose units from the non-reducing ends of (1-&gt;3)-beta-D-glucans, releasing alpha-glucose.. The protein is Glucan 1,3-beta-glucosidase 2 (EXG2) of Saccharomyces cerevisiae (strain ATCC 204508 / S288c) (Baker's yeast).